We begin with the raw amino-acid sequence, 91 residues long: Probable Fe(2+)-trafficking protein (91 aa).

Belongs to the Fe(2+)-trafficking protein family.

Could be a mediator in iron transactions between iron acquisition and iron-requiring processes, such as synthesis and/or repair of Fe-S clusters in biosynthetic enzymes. In Polynucleobacter necessarius subsp. necessarius (strain STIR1), this protein is Probable Fe(2+)-trafficking protein.